Reading from the N-terminus, the 466-residue chain is Glutamate decarboxylase (466 aa).

K277 bears the N6-(pyridoxal phosphate)lysine mark.

This sequence belongs to the group II decarboxylase family. The cofactor is pyridoxal 5'-phosphate.

The enzyme catalyses L-glutamate + H(+) = 4-aminobutanoate + CO2. In terms of biological role, converts internalized glutamate to GABA and increases the internal pH. Involved in glutamate-dependent acid resistance. The sequence is that of Glutamate decarboxylase (gadB) from Lactococcus lactis subsp. cremoris (strain MG1363).